The sequence spans 217 residues: tRNA (guanine-N(7)-)-methyltransferase (217 aa).

The S-adenosyl-L-methionine site is built by E48, E73, N100, and D123. D123 is a catalytic residue. Residues K127 and D159 each coordinate substrate.

Belongs to the class I-like SAM-binding methyltransferase superfamily. TrmB family.

It catalyses the reaction guanosine(46) in tRNA + S-adenosyl-L-methionine = N(7)-methylguanosine(46) in tRNA + S-adenosyl-L-homocysteine. Its pathway is tRNA modification; N(7)-methylguanine-tRNA biosynthesis. Its function is as follows. Catalyzes the formation of N(7)-methylguanine at position 46 (m7G46) in tRNA. In Leptospira borgpetersenii serovar Hardjo-bovis (strain JB197), this protein is tRNA (guanine-N(7)-)-methyltransferase.